Here is a 119-residue protein sequence, read N- to C-terminus: MACFVVVALLVLLSLSGLEAIQHAPKIQVYSRHPAENGKPNFLNCYVSGFHPSDIEVDLLKNGKKIEKVEHSDLSFSKDWSFYLLYYTEFTPNEKDEYACRVSHVTFSTPKTVKWDRNL.

An N-terminal signal peptide occupies residues 1 to 20 (MACFVVVALLVLLSLSGLEA). One can recognise an Ig-like C1-type domain in the interval 25–114 (PKIQVYSRHP…VTFSTPKTVK (90 aa)). Cysteine 45 and cysteine 100 are disulfide-bonded.

Belongs to the beta-2-microglobulin family. In terms of assembly, heterodimer of an alpha chain and a beta chain. Beta-2-microglobulin is the beta-chain of major histocompatibility complex class I molecules.

It is found in the secreted. In terms of biological role, component of the class I major histocompatibility complex (MHC). Involved in the presentation of peptide antigens to the immune system. In Leontopithecus chrysopygus (Golden-rumped lion tamarin), this protein is Beta-2-microglobulin (B2M).